We begin with the raw amino-acid sequence, 721 residues long: Polyribonucleotide nucleotidyltransferase (721 aa).

Positions 490 and 496 each coordinate Mg(2+). Residues 557–618 enclose the KH domain; that stretch reads PRILTLKINP…EAVRQKIEGL (62 aa). Residues 625 to 693 enclose the S1 motif domain; that stretch reads GEEYEGTVVK…DRGKIDLIRP (69 aa). Residues 696–721 form a disordered region; that stretch reads EGKIAPREPRAARAGGDRGGRPPRRE.

The protein belongs to the polyribonucleotide nucleotidyltransferase family. The cofactor is Mg(2+).

The protein localises to the cytoplasm. It catalyses the reaction RNA(n+1) + phosphate = RNA(n) + a ribonucleoside 5'-diphosphate. Involved in mRNA degradation. Catalyzes the phosphorolysis of single-stranded polyribonucleotides processively in the 3'- to 5'-direction. This Deinococcus geothermalis (strain DSM 11300 / CIP 105573 / AG-3a) protein is Polyribonucleotide nucleotidyltransferase.